The primary structure comprises 559 residues: Formate--tetrahydrofolate ligase (559 aa).

Position 67-74 (67-74 (TPAGEGKS)) interacts with ATP.

Belongs to the formate--tetrahydrofolate ligase family.

It carries out the reaction (6S)-5,6,7,8-tetrahydrofolate + formate + ATP = (6R)-10-formyltetrahydrofolate + ADP + phosphate. The protein operates within one-carbon metabolism; tetrahydrofolate interconversion. The protein is Formate--tetrahydrofolate ligase of Lactobacillus delbrueckii subsp. bulgaricus (strain ATCC 11842 / DSM 20081 / BCRC 10696 / JCM 1002 / NBRC 13953 / NCIMB 11778 / NCTC 12712 / WDCM 00102 / Lb 14).